The sequence spans 555 residues: Adenine deaminase (555 aa).

The protein belongs to the metallo-dependent hydrolases superfamily. Adenine deaminase family. Requires Mn(2+) as cofactor.

It catalyses the reaction adenine + H2O + H(+) = hypoxanthine + NH4(+). The chain is Adenine deaminase from Methanosarcina mazei (strain ATCC BAA-159 / DSM 3647 / Goe1 / Go1 / JCM 11833 / OCM 88) (Methanosarcina frisia).